We begin with the raw amino-acid sequence, 273 residues long: Light-independent protochlorophyllide reductase iron-sulfur ATP-binding protein (273 aa).

Residues 12-17 and Lys-41 each bind ATP; that span reads GIGKST. A Mg(2+)-binding site is contributed by Ser-16. [4Fe-4S] cluster is bound by residues Cys-97 and Cys-131. 182-183 is a binding site for ATP; it reads NR.

This sequence belongs to the NifH/BchL/ChlL family. Homodimer. Protochlorophyllide reductase is composed of three subunits; BchL, BchN and BchB. [4Fe-4S] cluster is required as a cofactor.

The catalysed reaction is chlorophyllide a + oxidized 2[4Fe-4S]-[ferredoxin] + 2 ADP + 2 phosphate = protochlorophyllide a + reduced 2[4Fe-4S]-[ferredoxin] + 2 ATP + 2 H2O. The protein operates within porphyrin-containing compound metabolism; bacteriochlorophyll biosynthesis (light-independent). In terms of biological role, component of the dark-operative protochlorophyllide reductase (DPOR) that uses Mg-ATP and reduced ferredoxin to reduce ring D of protochlorophyllide (Pchlide) to form chlorophyllide a (Chlide). This reaction is light-independent. The L component serves as a unique electron donor to the NB-component of the complex, and binds Mg-ATP. The chain is Light-independent protochlorophyllide reductase iron-sulfur ATP-binding protein from Roseiflexus castenholzii (strain DSM 13941 / HLO8).